Reading from the N-terminus, the 421-residue chain is 3-phosphoshikimate 1-carboxyvinyltransferase (421 aa).

3-phosphoshikimate contacts are provided by lysine 19, serine 20, and arginine 24. Lysine 19 contributes to the phosphoenolpyruvate binding site. Phosphoenolpyruvate contacts are provided by glycine 88 and arginine 116. Serine 160, glutamine 162, aspartate 307, and lysine 334 together coordinate 3-phosphoshikimate. Glutamine 162 provides a ligand contact to phosphoenolpyruvate. Aspartate 307 functions as the Proton acceptor in the catalytic mechanism. Residues arginine 338 and arginine 380 each contribute to the phosphoenolpyruvate site.

The protein belongs to the EPSP synthase family. In terms of assembly, monomer.

The protein localises to the cytoplasm. It carries out the reaction 3-phosphoshikimate + phosphoenolpyruvate = 5-O-(1-carboxyvinyl)-3-phosphoshikimate + phosphate. The protein operates within metabolic intermediate biosynthesis; chorismate biosynthesis; chorismate from D-erythrose 4-phosphate and phosphoenolpyruvate: step 6/7. In terms of biological role, catalyzes the transfer of the enolpyruvyl moiety of phosphoenolpyruvate (PEP) to the 5-hydroxyl of shikimate-3-phosphate (S3P) to produce enolpyruvyl shikimate-3-phosphate and inorganic phosphate. This Thermotoga neapolitana (strain ATCC 49049 / DSM 4359 / NBRC 107923 / NS-E) protein is 3-phosphoshikimate 1-carboxyvinyltransferase.